The following is a 439-amino-acid chain: Agmatine coumaroyltransferase-1 (439 aa).

Active-site proton acceptor residues include His-152 and Asp-385.

Belongs to the plant acyltransferase family. As to quaternary structure, monomer.

The catalysed reaction is 4-coumaroyl-CoA + agmatine = N-(4-guanidinobutyl)-4-hydroxycinnamamide + CoA + H(+). With respect to regulation, inhibited by DEPC. Completely inhibited by ZnSO(4), strongly inhibited by CuSO(4), partially inhibited by MnCl(2). Unaffected by MgCl(2) or CaCl(2). Involved in the synthesis of hordatines (antifungal hydroxycinnamoylagmatine derivatives). Specific for agmatine as the acyl acceptor, inactive towards tyramine and putrescine. Has activity with the acyl donors 4-coumaroyl-CoA, cinnamoyl-CoA, caffeoyl-CoA, feruloyl-CoA, and to a lesser extent sinapoyl-CoA. In Hordeum vulgare (Barley), this protein is Agmatine coumaroyltransferase-1 (ACT-1).